The chain runs to 256 residues: Chlorophyll a-b binding protein CP24 10B, chloroplastic (256 aa).

The transit peptide at 1–45 (MTTTSATAVLNGLSSSFLTGGKKTQALLGAHVTARVTTPKRFVVA) directs the protein to the chloroplast. Helical transmembrane passes span 106-126 (WAMAAVLGIFVGQAWSGIPWF) and 134-154 (AIAPFSFGSLLGTQLLLMGWV).

This sequence belongs to the ELIP/psbS family.

The protein resides in the plastid. It localises to the chloroplast thylakoid membrane. The polypeptide is Chlorophyll a-b binding protein CP24 10B, chloroplastic (CAP10B) (Solanum lycopersicum (Tomato)).